Consider the following 121-residue polypeptide: Putative RNase MJ1216 (121 aa).

Active-site residues include Arg-76 and His-81. The short motif at 76 to 83 (RDKLIHQY) is the RX(4)HXY motif element. Tyr-83 bears the O-di-AMP-tyrosine mark.

This sequence belongs to the HepT RNase toxin family. In terms of assembly, homodimer, probably forms a complex with antitoxin MJ1215 or MJ1217. Post-translationally, modified by antitoxin MJ1215 or MJ1217; probably at least 2 successive AMPylation events occur on Tyr-83.

In terms of biological role, probable toxic component of a putative type VII toxin-antitoxin (TA) system, probably an RNase. Probably neutralized by antitoxin MJ1215 or MJ1217. Neutralization may be due to AMPylation by antitoxin. The polypeptide is Putative RNase MJ1216 (Methanocaldococcus jannaschii (strain ATCC 43067 / DSM 2661 / JAL-1 / JCM 10045 / NBRC 100440) (Methanococcus jannaschii)).